The following is a 587-amino-acid chain: Pyruvate decarboxylase 3 (587 aa).

Residues aspartate 48 and histidine 135 each contribute to the substrate site. The interval aspartate 415 to isoleucine 496 is thiamine pyrophosphate binding. The Mg(2+) site is built by aspartate 464, asparagine 491, and glycine 493. Glutamate 497 is a binding site for substrate.

Belongs to the TPP enzyme family. Homotetramer. It depends on a metal cation as a cofactor. The cofactor is thiamine diphosphate.

It catalyses the reaction a 2-oxocarboxylate + H(+) = an aldehyde + CO2. The protein is Pyruvate decarboxylase 3 (PDC3) of Oryza sativa subsp. indica (Rice).